The primary structure comprises 432 residues: Enolase (432 aa).

(2R)-2-phosphoglycerate is bound at residue Gln-163. Glu-205 acts as the Proton donor in catalysis. Mg(2+) is bound by residues Asp-242, Glu-288, and Asp-315. Positions 340, 369, 370, and 391 each coordinate (2R)-2-phosphoglycerate. The Proton acceptor role is filled by Lys-340.

Belongs to the enolase family. Mg(2+) serves as cofactor.

The protein resides in the cytoplasm. It is found in the secreted. The protein localises to the cell surface. It carries out the reaction (2R)-2-phosphoglycerate = phosphoenolpyruvate + H2O. The protein operates within carbohydrate degradation; glycolysis; pyruvate from D-glyceraldehyde 3-phosphate: step 4/5. In terms of biological role, catalyzes the reversible conversion of 2-phosphoglycerate (2-PG) into phosphoenolpyruvate (PEP). It is essential for the degradation of carbohydrates via glycolysis. This is Enolase from Enterococcus faecalis (strain ATCC 700802 / V583).